The sequence spans 1104 residues: MNKWLNTLSKTFTFRLLNCHYRRSLPLCQNFSLKKSLTHNQVRFFKMSDLDNLPPVDPKTGEVIINPLKEDGSPKTPKEIEKEKKKAEKLLKFAAKQAKKNAAATTGASQKKPKKKKEVEPIPEFIDKTVPGEKKILVSLDDPALKAYNPANVESSWYDWWIKTGVFEPEFTADGKVKPEGVFCIPAPPPNVTGALHIGHALTIAIQDSLIRYNRMKGKTVLFLPGFDHAGIATQSVVEKQIWAKDRKTRHDYGREAFVGKVWEWKEEYHSRIKNQIQKLGASYDWSREAFTLSPELTKSVEEAFVRLHDEGVIYRASRLVNWSVKLNTAISNLEVENKDVKSRTLLSVPGYDEKVEFGVLTSFAYPVIGSDEKLIIATTRPETIFGDTAVAVHPDDDRYKHLHGKFIQHPFLPRKIPIITDKEAVDMEFGTGAVKITPAHDQNDYNTGKRHNLEFINILTDDGLLNEECGPEWQGMKRFDARKKVIEQLKEKNLYVGQEDNEMTIPTCSRSGDIIEPLLKPQWWVSQSEMAKDAIKVVRDGQITITPKSSEAEYFHWLGNIQDWCISRQLWWGHRCPVYFINIEGEEHDRIDGDYWVAGRSMEEAEKKAAAKYPNSKFTLEQDEDVLDTWFSSGLWPFSTLGWPEKTKDMETFYPFSMLETGWDILFFWVTRMILLGLKLTGSVPFKEVFCHSLVRDAQGRKMSKSLGNVIDPLDVITGIKLDDLHAKLLQGNLDPREVEKAKIGQKESYPNGIPQCGTDAMRFALCAYTTGGRDINLDILRVEGYRKFCNKIYQATKFALMRLGDDYQPPATEGLSGNESLVEKWILHKLTETSKIVNEALDKRDFLTSTSSIYEFWYLICDVYIENSKYLIQEGSAIEKKSAKDTLYILLDNALKLIHPFMPFISEEMWQRLPKRSTEKAASIVKASYPVYVSEYDDVKSANAYDLVLNITKEARSLLSEYNILKNGKVFVESNHEEYFKTAEDQKDSIVSLIKAIDEVTVVRDASEIPEGCVLQSVNPEVNVHLLVKGHVDIDAEIAKVQKKLEKAKKSKNGIEQTINSKDYETKANTQAKEANKSKLDNTVAEIEGLEATIENLKRLKL.

A mitochondrion-targeting transit peptide spans 1–47 (MNKWLNTLSKTFTFRLLNCHYRRSLPLCQNFSLKKSLTHNQVRFFKM). At serine 73 the chain carries Phosphoserine. The tract at residues 99–119 (KKNAAATTGASQKKPKKKKEV) is disordered. The 'HIGH' region signature appears at 190 to 200 (PNVTGALHIGH). Serine 294 and serine 332 each carry phosphoserine. A 'KMSKS' region motif is present at residues 703–707 (KMSKS). Residue lysine 706 participates in ATP binding. Serine 707 carries the phosphoserine modification. Residue threonine 1003 is modified to Phosphothreonine.

The protein belongs to the class-I aminoacyl-tRNA synthetase family.

It is found in the cytoplasm. Its subcellular location is the mitochondrion. It catalyses the reaction tRNA(Val) + L-valine + ATP = L-valyl-tRNA(Val) + AMP + diphosphate. This chain is Valine--tRNA ligase, mitochondrial (VAS1), found in Saccharomyces cerevisiae (strain ATCC 204508 / S288c) (Baker's yeast).